The primary structure comprises 316 residues: N-acetyl-gamma-glutamyl-phosphate reductase (316 aa).

The active site involves C136.

Belongs to the NAGSA dehydrogenase family. Type 1 subfamily.

It localises to the cytoplasm. It catalyses the reaction N-acetyl-L-glutamate 5-semialdehyde + phosphate + NADP(+) = N-acetyl-L-glutamyl 5-phosphate + NADPH + H(+). It functions in the pathway amino-acid biosynthesis; L-arginine biosynthesis; N(2)-acetyl-L-ornithine from L-glutamate: step 3/4. In terms of biological role, catalyzes the NADPH-dependent reduction of N-acetyl-5-glutamyl phosphate to yield N-acetyl-L-glutamate 5-semialdehyde. This is N-acetyl-gamma-glutamyl-phosphate reductase from Xanthomonas axonopodis pv. citri (strain 306).